Here is a 238-residue protein sequence, read N- to C-terminus: Pyridoxine 5'-phosphate synthase (238 aa).

Asparagine 7 lines the 3-amino-2-oxopropyl phosphate pocket. 9 to 10 contributes to the 1-deoxy-D-xylulose 5-phosphate binding site; it reads DH. Arginine 18 lines the 3-amino-2-oxopropyl phosphate pocket. Histidine 43 serves as the catalytic Proton acceptor. Positions 45 and 50 each coordinate 1-deoxy-D-xylulose 5-phosphate. Catalysis depends on glutamate 70, which acts as the Proton acceptor. Threonine 100 is a 1-deoxy-D-xylulose 5-phosphate binding site. Histidine 191 functions as the Proton donor in the catalytic mechanism. Residues glycine 192 and 213-214 each bind 3-amino-2-oxopropyl phosphate; that span reads GH.

Belongs to the PNP synthase family. As to quaternary structure, homooctamer; tetramer of dimers.

It localises to the cytoplasm. It carries out the reaction 3-amino-2-oxopropyl phosphate + 1-deoxy-D-xylulose 5-phosphate = pyridoxine 5'-phosphate + phosphate + 2 H2O + H(+). It functions in the pathway cofactor biosynthesis; pyridoxine 5'-phosphate biosynthesis; pyridoxine 5'-phosphate from D-erythrose 4-phosphate: step 5/5. Its function is as follows. Catalyzes the complicated ring closure reaction between the two acyclic compounds 1-deoxy-D-xylulose-5-phosphate (DXP) and 3-amino-2-oxopropyl phosphate (1-amino-acetone-3-phosphate or AAP) to form pyridoxine 5'-phosphate (PNP) and inorganic phosphate. The polypeptide is Pyridoxine 5'-phosphate synthase (Syntrophobacter fumaroxidans (strain DSM 10017 / MPOB)).